A 156-amino-acid polypeptide reads, in one-letter code: Ribosomal RNA large subunit methyltransferase H (156 aa).

S-adenosyl-L-methionine contacts are provided by residues Leu-73, Gly-104, and 123–128 (LSPLTL).

Belongs to the RNA methyltransferase RlmH family. As to quaternary structure, homodimer.

It is found in the cytoplasm. It catalyses the reaction pseudouridine(1915) in 23S rRNA + S-adenosyl-L-methionine = N(3)-methylpseudouridine(1915) in 23S rRNA + S-adenosyl-L-homocysteine + H(+). Its function is as follows. Specifically methylates the pseudouridine at position 1915 (m3Psi1915) in 23S rRNA. The polypeptide is Ribosomal RNA large subunit methyltransferase H (Marinobacter nauticus (strain ATCC 700491 / DSM 11845 / VT8) (Marinobacter aquaeolei)).